A 102-amino-acid chain; its full sequence is Protein translation factor SUI1 homolog (102 aa).

It belongs to the SUI1 family.

The polypeptide is Protein translation factor SUI1 homolog (Nitrosopumilus maritimus (strain SCM1)).